Consider the following 157-residue polypeptide: SsrA-binding protein (157 aa).

The protein belongs to the SmpB family.

The protein resides in the cytoplasm. Required for rescue of stalled ribosomes mediated by trans-translation. Binds to transfer-messenger RNA (tmRNA), required for stable association of tmRNA with ribosomes. tmRNA and SmpB together mimic tRNA shape, replacing the anticodon stem-loop with SmpB. tmRNA is encoded by the ssrA gene; the 2 termini fold to resemble tRNA(Ala) and it encodes a 'tag peptide', a short internal open reading frame. During trans-translation Ala-aminoacylated tmRNA acts like a tRNA, entering the A-site of stalled ribosomes, displacing the stalled mRNA. The ribosome then switches to translate the ORF on the tmRNA; the nascent peptide is terminated with the 'tag peptide' encoded by the tmRNA and targeted for degradation. The ribosome is freed to recommence translation, which seems to be the essential function of trans-translation. The sequence is that of SsrA-binding protein from Clostridium novyi (strain NT).